The primary structure comprises 1240 residues: Structural polyprotein (1240 aa).

Positions 1 to 35 (MFPYPTLNYPPMAPINPMAYRDPNPPRQVAPFRPP) are necessary for nucleocapsid assembly and virus assembly. Residues 1-102 (MFPYPTLNYP…RKPKPGKRQR (102 aa)) form a disordered region. The segment covering 23 to 34 (PNPPRQVAPFRP) has biased composition (pro residues). A host transcription inhibition region spans residues 36-69 (LAAQIEDLRRSIANLTLKQRAPNPPAGPPAKRKK). The Supraphysiological nuclear export signal signature appears at 43 to 50 (LRRSIANL). Asn49 carries an N-linked (GlcNAc...) asparagine; by host glycan. The segment covering 65–102 (AKRKKPAPKPKPAQAKKKRPPPPAKKQKRKPKPGKRQR) has biased composition (basic residues). The Nuclear localization signal motif lies at 66-70 (KRKKP). A binding to the viral RNA region spans residues 82–112 (KRPPPPAKKQKRKPKPGKRQRMCMKLESDKT). A ribosome-binding region spans residues 97-111 (PGKRQRMCMKLESDK). Ser109 bears the Phosphoserine mark. A Peptidase S3 domain is found at 111 to 260 (KTFPIMLNGQ…KDTPEGSEPW (150 aa)). Thr112 is subject to Phosphothreonine. Residues His137, Asp159, and Ser211 each act as charge relay system in the active site. The segment at 261-272 (SLATVMCVLANI) is functions as an uncleaved signal peptide for the precursor of protein E3/E2. Residues 261–682 (SLATVMCVLA…HEVVVYYYNR (422 aa)) are Extracellular-facing. Residues Asn271 and Asn638 are each glycosylated (N-linked (GlcNAc...) asparagine; by host). The helical transmembrane segment at 683 to 703 (YPLTTIIGLCTCVAIIMVSCV) threads the bilayer. Residues 704–743 (HPCGSFAGLRNLCITPYKLAPNAQVPILLALLCCIKPTRA) are Cytoplasmic-facing. Residues Cys706, Cys716, Cys736, and Cys737 are each lipidated (S-palmitoyl cysteine; by host). The interval 715–735 (LCITPYKLAPNAQVPILLALL) is transient transmembrane before p62-6K protein processing. Residues 744-758 (DDTLQVLNYLWNNNQ) lie on the Extracellular side of the membrane. A helical membrane pass occupies residues 759–779 (NFFWMQTLIPLAALIVCMRIV). Position 780 (Arg780) is a topological domain, cytoplasmic. Residues 781-801 (CLFCCGPAFLLVCGAWAAAYE) form a helical membrane-spanning segment. The Extracellular portion of the chain corresponds to 802-1216 (HTAVMPNKVG…WSWLKVLVGG (415 aa)). Residue Asn834 is glycosylated (N-linked (GlcNAc...) asparagine; by host). 4 cysteine pairs are disulfide-bonded: Cys848–Cys913, Cys861–Cys893, Cys862–Cys895, and Cys867–Cys877. The interval 883-900 (VYPFMWGGAYCFCDTENT) is E1 fusion peptide loop. The N-linked (GlcNAc...) asparagine; by host glycan is linked to Asn933. 3 disulfide bridges follow: Cys1059–Cys1071, Cys1101–Cys1176, and Cys1106–Cys1180. The chain crosses the membrane as a helical span at residues 1217 to 1237 (TSAFIVLGLIATAVVALVLFF). At 1238 to 1240 (HRH) the chain is on the cytoplasmic side.

Part of a tetrameric complex composed of host CRM1, host importin alpha/beta dimer and the viral capsid; this complex blocks the receptor-mediated transport through the nuclear pore. Interacts with host phosphatase PPP1CA; this interaction dephosphorylates the capsid protein, which increases its ability to bind to the viral genome. Interacts with host karyopherin KPNA4; this interaction allows the nuclear import of the viral capsid protein. Interacts with spike glycoprotein E2. Interacts with host IRAK1; the interaction leads to inhibition of IRAK1-dependent signaling. As to quaternary structure, the precursor of protein E3/E2 and E1 form a heterodimer shortly after synthesis. In terms of assembly, the precursor of protein E3/E2 and E1 form a heterodimer shortly after synthesis. Processing of the precursor of protein E3/E2 into E2 and E3 results in a heterodimer of the spike glycoproteins E2 and E1. Spike at virion surface are constituted of three E2-E1 heterodimers. After target cell attachment and endocytosis, E1 change conformation to form homotrimers. Interacts with 6K protein. Processing of the precursor of protein E3/E2 into E2 and E3 results in a heterodimer of the spike glycoproteins E2 and E1. Spike at virion surface are constituted of three E2-E1 heterodimers. Interacts with 6K protein. As to quaternary structure, interacts with spike glycoprotein E1. Interacts with spike glycoprotein E2. Post-translationally, structural polyprotein: Specific enzymatic cleavages in vivo yield mature proteins. Capsid protein is auto-cleaved during polyprotein translation, unmasking a signal peptide at the N-terminus of the precursor of E3/E2. The remaining polyprotein is then targeted to the host endoplasmic reticulum, where host signal peptidase cleaves it into pE2, 6K and E1 proteins. pE2 is further processed to mature E3 and E2 by host furin in trans-Golgi vesicle. Phosphorylated on serine and threonine residues. In terms of processing, palmitoylated via thioester bonds. These palmitoylations may induce disruption of the C-terminus transmembrane. This would result in the reorientation of E2 C-terminus from lumenal to cytoplasmic side. Post-translationally, N-glycosylated. Palmitoylated via thioester bonds.

The protein localises to the virion. Its subcellular location is the host cytoplasm. It localises to the host cell membrane. It is found in the host nucleus. The protein resides in the virion membrane. The catalysed reaction is Autocatalytic release of the core protein from the N-terminus of the togavirus structural polyprotein by hydrolysis of a -Trp-|-Ser- bond.. Its function is as follows. Forms an icosahedral capsid with a T=4 symmetry composed of 240 copies of the capsid protein surrounded by a lipid membrane through which penetrate 80 spikes composed of trimers of E1-E2 heterodimers. The capsid protein binds to the viral RNA genome at a site adjacent to a ribosome binding site for viral genome translation following genome release. Possesses a protease activity that results in its autocatalytic cleavage from the nascent structural protein. Following its self-cleavage, the capsid protein transiently associates with ribosomes, and within several minutes the protein binds to viral RNA and rapidly assembles into icosahedric core particles. The resulting nucleocapsid eventually associates with the cytoplasmic domain of the spike glycoprotein E2 at the cell membrane, leading to budding and formation of mature virions. In case of infection, new virions attach to target cells and after clathrin-mediated endocytosis their membrane fuses with the host endosomal membrane. This leads to the release of the nucleocapsid into the cytoplasm, followed by an uncoating event necessary for the genomic RNA to become accessible. The uncoating might be triggered by the interaction of capsid proteins with ribosomes. Binding of ribosomes would release the genomic RNA since the same region is genomic RNA-binding and ribosome-binding. Specifically inhibits interleukin-1 receptor-associated kinase 1/IRAK1-dependent signaling during viral entry, representing a means by which the alphaviruses may evade innate immune detection and activation prior to viral gene expression. Inhibits host transcription. Forms a tetrameric complex with XPO1/CRM1 and the nuclear import receptor importin. This complex blocks the central channel of host nuclear pores thereby inhibiting the receptor-mediated nuclear transport and thus the host mRNA and rRNA transcription. The inhibition of transcription is linked to a cytopathic effect on the host cell. Functionally, provides the signal sequence for the translocation of the precursor of protein E3/E2 to the host endoplasmic reticulum. Furin-cleaved E3 remains associated with spike glycoprotein E1 and mediates pH protection of the latter during the transport via the secretory pathway. After virion release from the host cell, the assembly protein E3 is gradually released in the extracellular space. Plays a role in viral attachment to target host cell, by binding to the cell receptor. Synthesized as a p62 precursor which is processed by furin at the cell membrane just before virion budding, giving rise to E2-E1 heterodimer. The p62-E1 heterodimer is stable, whereas E2-E1 is unstable and dissociate at low pH. p62 is processed at the last step, presumably to avoid E1 fusion activation before its final export to cell surface. E2 C-terminus contains a transitory transmembrane that would be disrupted by palmitoylation, resulting in reorientation of the C-terminal tail from lumenal to cytoplasmic side. This step is critical since E2 C-terminus is involved in budding by interacting with capsid proteins. This release of E2 C-terminus in cytoplasm occurs lately in protein export, and precludes premature assembly of particles at the endoplasmic reticulum membrane. In terms of biological role, constitutive membrane protein involved in virus glycoprotein processing, cell permeabilization, and the budding of viral particles. Disrupts the calcium homeostasis of the cell, probably at the endoplasmic reticulum level. This leads to cytoplasmic calcium elevation. Because of its lipophilic properties, the 6K protein is postulated to influence the selection of lipids that interact with the transmembrane domains of the glycoproteins, which, in turn, affects the deformability of the bilayer required for the extreme curvature that occurs as budding proceeds. Present in low amount in virions, about 3% compared to viral glycoproteins. Its function is as follows. Class II viral fusion protein. Fusion activity is inactive as long as E1 is bound to E2 in mature virion. After virus attachment to target cell and endocytosis, acidification of the endosome would induce dissociation of E1/E2 heterodimer and concomitant trimerization of the E1 subunits. This E1 trimer is fusion active, and promotes release of viral nucleocapsid in cytoplasm after endosome and viral membrane fusion. Efficient fusion requires the presence of cholesterol and sphingolipid in the target membrane. Fusion is optimal at levels of about 1 molecule of cholesterol per 2 molecules of phospholipids, and is specific for sterols containing a 3-beta-hydroxyl group. The protein is Structural polyprotein of Eastern equine encephalitis virus (strain va33[ten broeck]) (EEEV).